Reading from the N-terminus, the 151-residue chain is Small ribosomal subunit protein uS11 (151 aa).

The tract at residues 129–151 is disordered; the sequence is IEDVTPVPSDSTRRKGGRRGRRL. The segment covering 142-151 has biased composition (basic residues); the sequence is RKGGRRGRRL.

It belongs to the universal ribosomal protein uS11 family.

The sequence is that of Small ribosomal subunit protein uS11 (RPS14) from Procambarus clarkii (Red swamp crayfish).